A 50-amino-acid polypeptide reads, in one-letter code: Sperm protamine P1 (50 aa).

The protein belongs to the protamine P1 family. Testis.

Its subcellular location is the nucleus. It is found in the chromosome. Protamines substitute for histones in the chromatin of sperm during the haploid phase of spermatogenesis. They compact sperm DNA into a highly condensed, stable and inactive complex. The chain is Sperm protamine P1 (PRM1) from Trachypithecus vetulus (Purple-faced langur).